Here is a 445-residue protein sequence, read N- to C-terminus: Phosphoglucosamine mutase (445 aa).

The Phosphoserine intermediate role is filled by S102. S102, D240, D242, and D244 together coordinate Mg(2+). A Phosphoserine modification is found at S102.

It belongs to the phosphohexose mutase family. The cofactor is Mg(2+). Post-translationally, activated by phosphorylation.

The enzyme catalyses alpha-D-glucosamine 1-phosphate = D-glucosamine 6-phosphate. Catalyzes the conversion of glucosamine-6-phosphate to glucosamine-1-phosphate. This chain is Phosphoglucosamine mutase, found in Mycobacterium sp. (strain JLS).